Reading from the N-terminus, the 310-residue chain is Glutaminase (310 aa).

The substrate site is built by Ser-67, Asn-118, Glu-161, Asn-168, Tyr-192, Tyr-244, and Val-262.

It belongs to the glutaminase family. In terms of assembly, homotetramer.

The catalysed reaction is L-glutamine + H2O = L-glutamate + NH4(+). This chain is Glutaminase, found in Legionella pneumophila (strain Corby).